A 62-amino-acid polypeptide reads, in one-letter code: Large ribosomal subunit protein bL28 (62 aa).

This sequence belongs to the bacterial ribosomal protein bL28 family.

In Helicobacter pylori (strain P12), this protein is Large ribosomal subunit protein bL28.